The following is a 577-amino-acid chain: Sensor protein ChvG (577 aa).

Over 1 to 29 (MRGQRRWAHPFTLIRRLFGNAVFSSLTRR) the chain is Cytoplasmic. The helical transmembrane segment at 30 to 50 (IVFFNLVALVVLVGGIMYLNQ) threads the bilayer. The Periplasmic portion of the chain corresponds to 51 to 260 (FREGLIDARV…DIDKIVHAER (210 aa)). Residues 261–281 (LAIIRVFGVAALVNVILSLLL) traverse the membrane as a helical segment. Residues 282-577 (SSTIANPLRR…VLSLPAGPHP (296 aa)) are Cytoplasmic-facing. In terms of domain architecture, HAMP spans 283-339 (STIANPLRRLSAAAIRVRRGGAKEREEIPDFSSRQDEIGNLSVALREMTTALYDRIA). Residues 347–575 (DVSHELKNPL…RFVLSLPAGP (229 aa)) enclose the Histidine kinase domain. H350 carries the post-translational modification Phosphohistidine.

In terms of assembly, homodimer.

It localises to the cell inner membrane. The catalysed reaction is ATP + protein L-histidine = ADP + protein N-phospho-L-histidine.. Its pathway is glycan metabolism; exopolysaccharide biosynthesis. Member of a two-component regulatory system ChvG(ExoS)/ChvI involved in regulating the production of succinoglycan. Activates ChvI by phosphorylation. This is Sensor protein ChvG (chvG) from Rhizobium meliloti (strain 1021) (Ensifer meliloti).